The following is a 150-amino-acid chain: Ribonuclease H (150 aa).

Residues 7–148 enclose the RNase H type-1 domain; the sequence is ESNIVEIWTD…ADQLATKARM (142 aa). Residues Asp16, Glu54, Asp76, and Asp140 each contribute to the Mg(2+) site.

It belongs to the RNase H family. Monomer. It depends on Mg(2+) as a cofactor.

The protein localises to the cytoplasm. It carries out the reaction Endonucleolytic cleavage to 5'-phosphomonoester.. Endonuclease that specifically degrades the RNA of RNA-DNA hybrids. The chain is Ribonuclease H from Granulibacter bethesdensis (strain ATCC BAA-1260 / CGDNIH1).